Consider the following 415-residue polypeptide: DNA double-strand break repair protein Mre11 (415 aa).

4 residues coordinate Mn(2+): aspartate 10, histidine 12, aspartate 51, and asparagine 86. Residue histidine 87 is the Proton donor of the active site. Mn(2+)-binding residues include histidine 174, histidine 208, and histidine 210.

Belongs to the MRE11/RAD32 family. Homodimer. Forms a heterotetramer composed of two Mre11 subunits and two Rad50 subunits. Mn(2+) is required as a cofactor.

Nuclease activity is regulated by Rad50. Part of the Rad50/Mre11 complex, which is involved in the early steps of DNA double-strand break (DSB) repair. The complex may facilitate opening of the processed DNA ends to aid in the recruitment of HerA and NurA. Mre11 binds to DSB ends and has both double-stranded 3'-5' exonuclease activity and single-stranded endonuclease activity. This Pyrococcus abyssi (strain GE5 / Orsay) protein is DNA double-strand break repair protein Mre11.